Here is a 198-residue protein sequence, read N- to C-terminus: Superoxide dismutase [Fe] (198 aa).

Residues His-27, His-74, Asp-158, and His-162 each coordinate Fe cation.

It belongs to the iron/manganese superoxide dismutase family. As to quaternary structure, homodimer. The cofactor is Fe cation.

The protein resides in the cytoplasm. It carries out the reaction 2 superoxide + 2 H(+) = H2O2 + O2. In terms of biological role, destroys superoxide anion radicals which are normally produced within the cells and which are toxic to biological systems. This is Superoxide dismutase [Fe] (SODB) from Plasmodium malariae.